We begin with the raw amino-acid sequence, 478 residues long: Pathogenicity cluster 5 protein d (478 aa).

The first 19 residues, 1–19, serve as a signal peptide directing secretion; it reads MQIQNLIAALAGMAVVAEA. Disordered stretches follow at residues 35-89 and 299-400; these read RQNK…GQAN and NGGK…GGKG. Over residues 38 to 64 the composition is skewed to low complexity; that stretch reads KGGNNNNNNNNNNNNNNNNNKNNGGNN. The segment covering 65–89 has biased composition (polar residues); it reads QLCLNPNNVQKGSQQAGTPKQGQAN. Gly residues predominate over residues 316–326; it reads NNDGGGGGNDG. Composition is skewed to low complexity over residues 327–348 and 379–393; these read GNNS…QNGA and TQAG…TNGN. 2 N-linked (GlcNAc...) asparagine glycosylation sites follow: N328 and N332.

It localises to the secreted. Secreted protein required for appressorial penetration of intact host epidermal cells and for pathogenicit, but not for subsequent biotrophic and necrotrophic colonization of leaves. This chain is Pathogenicity cluster 5 protein d, found in Colletotrichum graminicola (strain M1.001 / M2 / FGSC 10212) (Maize anthracnose fungus).